A 224-amino-acid chain; its full sequence is ATP synthase subunit a (224 aa).

6 helical membrane-spanning segments follow: residues leucine 17–leucine 37, isoleucine 72–isoleucine 92, leucine 99–isoleucine 119, methionine 125–isoleucine 145, leucine 170–leucine 190, and isoleucine 195–leucine 215.

Belongs to the ATPase A chain family. F-type ATPases have 2 components, CF(1) - the catalytic core - and CF(0) - the membrane proton channel. CF(1) has five subunits: alpha(3), beta(3), gamma(1), delta(1), epsilon(1). CF(0) has three main subunits: a, b and c.

The protein localises to the mitochondrion inner membrane. Mitochondrial membrane ATP synthase (F(1)F(0) ATP synthase or Complex V) produces ATP from ADP in the presence of a proton gradient across the membrane which is generated by electron transport complexes of the respiratory chain. F-type ATPases consist of two structural domains, F(1) - containing the extramembraneous catalytic core and F(0) - containing the membrane proton channel, linked together by a central stalk and a peripheral stalk. During catalysis, ATP synthesis in the catalytic domain of F(1) is coupled via a rotary mechanism of the central stalk subunits to proton translocation. Key component of the proton channel; it may play a direct role in the translocation of protons across the membrane. The chain is ATP synthase subunit a (mt:ATPase6) from Drosophila simulans (Fruit fly).